The following is a 140-amino-acid chain: Large ribosomal subunit protein uL16 (140 aa).

Residues 1–17 (MPLMPKRVKHRKMHRGS) are compositionally biased toward basic residues. The disordered stretch occupies residues 1–21 (MPLMPKRVKHRKMHRGSRSGN).

The protein belongs to the universal ribosomal protein uL16 family. In terms of assembly, part of the 50S ribosomal subunit.

Functionally, binds 23S rRNA and is also seen to make contacts with the A and possibly P site tRNAs. The chain is Large ribosomal subunit protein uL16 from Akkermansia muciniphila (strain ATCC BAA-835 / DSM 22959 / JCM 33894 / BCRC 81048 / CCUG 64013 / CIP 107961 / Muc).